The chain runs to 459 residues: Zinc finger protein ZFP2 (459 aa).

13 consecutive C2H2-type zinc fingers follow at residues 100–122, 128–150, 156–178, 184–206, 212–234, 240–262, 268–290, 296–318, 324–346, 352–374, 380–402, 408–430, and 436–458; these read YGCDECGKTFRQSSSLLKHQRIH, YTCNVCDKHFIERSSLTVHQRTH, YKCHECGKAFSQSMNLTVHQRTH, YQCKECGKAFRKNSSLIQHERIH, YKCHDCGKAFTQSMNLTVHQRTH, YECNQCGKAFSQSMHLIVHQRSH, YECSECGKAFSKSSTLTLHQRNH, YKCNKCGKSFSQSTYLIEHQRLH, FECNQCGKAFSKNSSLTQHRRIH, YECMICGKHFTGRSSLTVHQVIH, YECTECGKAFSQSAYLIEHQRIH, YECDQCGKAFIKNSSLIVHQRIH, and YQCNECGKSFSRSTNLTRHQRTH.

This sequence belongs to the krueppel C2H2-type zinc-finger protein family.

Its subcellular location is the nucleus. Its function is as follows. Probable transcription factor involved in neuronal differentiation and/or phenotypic maintenance. The chain is Zinc finger protein ZFP2 (Zfp2) from Mus musculus (Mouse).